We begin with the raw amino-acid sequence, 300 residues long: ATP-dependent (S)-NAD(P)H-hydrate dehydratase (300 aa).

In terms of domain architecture, YjeF C-terminal spans 14 to 293 (LLTLFKTIVP…NEISAVFRSD (280 aa)). (6S)-NADPHX contacts are provided by residues glycine 114 and 167–173 (NAMEFRR). ATP is bound by residues 198-202 (KGVND) and 219-228 (GSGRRCGGQG). Aspartate 229 lines the (6S)-NADPHX pocket.

The protein belongs to the NnrD/CARKD family. It depends on Mg(2+) as a cofactor.

The catalysed reaction is (6S)-NADHX + ATP = ADP + phosphate + NADH + H(+). The enzyme catalyses (6S)-NADPHX + ATP = ADP + phosphate + NADPH + H(+). Catalyzes the dehydration of the S-form of NAD(P)HX at the expense of ATP, which is converted to ADP. Together with NAD(P)HX epimerase, which catalyzes the epimerization of the S- and R-forms, the enzyme allows the repair of both epimers of NAD(P)HX, a damaged form of NAD(P)H that is a result of enzymatic or heat-dependent hydration. This Drosophila pseudoobscura pseudoobscura (Fruit fly) protein is ATP-dependent (S)-NAD(P)H-hydrate dehydratase.